We begin with the raw amino-acid sequence, 126 residues long: Fatty acid-binding protein 10-A, liver basic (126 aa).

Positions 57, 77, 99, and 101 each coordinate cholate.

The protein belongs to the calycin superfamily. Fatty-acid binding protein (FABP) family. Expressed in the developing embryonic liver from 48 hpf. Also expressed in the liver of 5-day-old larvae. In adults, primarily expressed in the liver, with weak expression in the testis and intestine.

It localises to the cytoplasm. Binds hydrophobic ligands, such as cholate, in the cytoplasm. May be involved in intracellular lipid transport. Binds one cholate per subunit. The protein is Fatty acid-binding protein 10-A, liver basic (fabp10a) of Danio rerio (Zebrafish).